The primary structure comprises 385 residues: MKLVRKNIEKDNAGQVTLVPEEPEDMWHTYNLVQVGDSLRASTIRKVQTESSTGSVGSNRVRTTLTLCVEAIDFDSQACQLRVKGTNIQENEYVKMGAYHTIELEPNRQFTLAKKQWDSVVLERIEQACDPAWSADVAAVVMQEGLAHICLVTPSMTLTRAKVEVNIPRKRKGNCSQHDRALERFYEQVVQAIQRHIHFDVVKCILVASPGFVREQFCDYLFQQAVKTDNKLLLENRSKFLQVHASSGHKYSLKEALCDPTVASRLSDTKAAGEVKALDDFYKMLQHEPDRAFYGLKQVEKANEAMAIDTLLISDELFRHQDVATRSRYVRLVDSVKENAGTVRIFSSLHVSGEQLSQLTGVAAILRFPVPELSDQEGDSSSEED.

A Glycyl lysine isopeptide (Lys-Gly) (interchain with G-Cter in SUMO2) cross-link involves residue Lys162. Ser374, Ser380, Ser381, and Ser382 each carry phosphoserine.

It belongs to the eukaryotic release factor 1 family. Pelota subfamily. Component of the Pelota-HBS1L complex, also named Dom34-Hbs1 complex, composed of PELO and HBS1L. Interacts with PINK1. Interacts with ABCE1. Interacts with CNOT4. A divalent metal cation is required as a cofactor. As to expression, ubiquitously expressed.

The protein localises to the cytoplasm. Component of the Pelota-HBS1L complex, a complex that recognizes stalled ribosomes and triggers the No-Go Decay (NGD) pathway. In the Pelota-HBS1L complex, PELO recognizes ribosomes stalled at the 3' end of an mRNA and engages stalled ribosomes by destabilizing mRNA in the mRNA channel. Following mRNA extraction from stalled ribosomes by the SKI complex, the Pelota-HBS1L complex promotes recruitment of ABCE1, which drives the disassembly of stalled ribosomes, followed by degradation of damaged mRNAs as part of the NGD pathway. As part of the PINK1-regulated signaling, upon mitochondrial damage is recruited to the ribosome/mRNA-ribonucleoprotein complex associated to mitochondrial outer membrane thereby enabling the recruitment of autophagy receptors and induction of mitophagy. The chain is Protein pelota homolog from Homo sapiens (Human).